Reading from the N-terminus, the 550-residue chain is Arginine--tRNA ligase (550 aa).

The 'HIGH' region motif lies at 130–140 (ANPTGPIHIGG).

The protein belongs to the class-I aminoacyl-tRNA synthetase family. Monomer.

Its subcellular location is the cytoplasm. The catalysed reaction is tRNA(Arg) + L-arginine + ATP = L-arginyl-tRNA(Arg) + AMP + diphosphate. The chain is Arginine--tRNA ligase from Mycobacterium marinum (strain ATCC BAA-535 / M).